Here is a 372-residue protein sequence, read N- to C-terminus: Lipoyl synthase, mitochondrial (372 aa).

[4Fe-4S] cluster contacts are provided by cysteine 103, cysteine 108, cysteine 114, cysteine 134, cysteine 138, cysteine 141, and serine 349. Positions 119 to 338 (EHGTQTATIM…EERGNQLGFL (220 aa)) constitute a Radical SAM core domain.

Belongs to the radical SAM superfamily. Lipoyl synthase family. Requires [4Fe-4S] cluster as cofactor.

Its subcellular location is the mitochondrion. It catalyses the reaction [[Fe-S] cluster scaffold protein carrying a second [4Fe-4S](2+) cluster] + N(6)-octanoyl-L-lysyl-[protein] + 2 oxidized [2Fe-2S]-[ferredoxin] + 2 S-adenosyl-L-methionine + 4 H(+) = [[Fe-S] cluster scaffold protein] + N(6)-[(R)-dihydrolipoyl]-L-lysyl-[protein] + 4 Fe(3+) + 2 hydrogen sulfide + 2 5'-deoxyadenosine + 2 L-methionine + 2 reduced [2Fe-2S]-[ferredoxin]. The protein operates within protein modification; protein lipoylation via endogenous pathway; protein N(6)-(lipoyl)lysine from octanoyl-[acyl-carrier-protein]: step 2/2. In terms of biological role, catalyzes the radical-mediated insertion of two sulfur atoms into the C-6 and C-8 positions of the octanoyl moiety bound to the lipoyl domains of lipoate-dependent enzymes, thereby converting the octanoylated domains into lipoylated derivatives. The sequence is that of Lipoyl synthase, mitochondrial from Drosophila willistoni (Fruit fly).